The sequence spans 387 residues: 3-ketoacyl-CoA thiolase (387 aa).

C91 (acyl-thioester intermediate) is an active-site residue. Catalysis depends on proton acceptor residues H343 and C373.

Belongs to the thiolase-like superfamily. Thiolase family. In terms of assembly, heterotetramer of two alpha chains (FadB) and two beta chains (FadA).

The protein resides in the cytoplasm. It carries out the reaction an acyl-CoA + acetyl-CoA = a 3-oxoacyl-CoA + CoA. Its pathway is lipid metabolism; fatty acid beta-oxidation. Its function is as follows. Catalyzes the final step of fatty acid oxidation in which acetyl-CoA is released and the CoA ester of a fatty acid two carbons shorter is formed. The polypeptide is 3-ketoacyl-CoA thiolase (Salmonella choleraesuis (strain SC-B67)).